Consider the following 500-residue polypeptide: E3 ubiquitin-protein ligase TRIM4 (500 aa).

The RING-type zinc finger occupies 12 to 53 (CPICLDYFQDPVSIECGHNFCRGCLHRNWAPGGGPFPCPECR). Residues 82–123 (VPPGLCGRHWEPLRLFCEDDQRPVCLVCRESQEHQTHAMAPI) form a B box-type zinc finger. The Zn(2+) site is built by Cys-87, His-90, Cys-109, and His-115. A coiled-coil region spans residues 212-253 (EEEDLFLQRLNKEEEETKKKLNENTLKLNQTIASLKKLILEV). One can recognise a B30.2/SPRY domain in the interval 288–500 (KVKTVCQIPL…LVIPPVTDRK (213 aa)).

Belongs to the TRIM/RBCC family. In terms of assembly, homotrimer.

The protein localises to the cytoplasm. The catalysed reaction is S-ubiquitinyl-[E2 ubiquitin-conjugating enzyme]-L-cysteine + [acceptor protein]-L-lysine = [E2 ubiquitin-conjugating enzyme]-L-cysteine + N(6)-ubiquitinyl-[acceptor protein]-L-lysine.. The protein operates within protein modification; protein ubiquitination. Functionally, E3 ubiquitin-protein ligase. Mediates 'Lys-63'-linked polyubiquitination of the innate immune receptor RIGI, this linkage doesn't lead to proteasomal degradation but seems to enhance IFN induction. In Homo sapiens (Human), this protein is E3 ubiquitin-protein ligase TRIM4 (TRIM4).